Consider the following 210-residue polypeptide: Chaperone protein TorD (210 aa).

Belongs to the TorD/DmsD family. TorD subfamily.

The protein resides in the cytoplasm. In terms of biological role, involved in the biogenesis of TorA. Acts on TorA before the insertion of the molybdenum cofactor and, as a result, probably favors a conformation of the apoenzyme that is competent for acquiring the cofactor. The sequence is that of Chaperone protein TorD from Salmonella arizonae (strain ATCC BAA-731 / CDC346-86 / RSK2980).